The chain runs to 1070 residues: Carbamoyl phosphate synthase large chain (1070 aa).

A carboxyphosphate synthetic domain region spans residues 1 to 399; that stretch reads MPKREDIKKV…SLLKAFKSLD (399 aa). 12 residues coordinate ATP: arginine 129, arginine 169, glycine 175, glycine 176, glutamate 208, valine 210, glutamate 215, glycine 241, valine 242, histidine 243, glutamine 284, and glutamate 296. The region spanning 133 to 325 is the ATP-grasp 1 domain; it reads KETMLRIGEK…IARVTAKIAI (193 aa). Mg(2+)-binding residues include glutamine 284, glutamate 296, and asparagine 298. Residues glutamine 284, glutamate 296, and asparagine 298 each contribute to the Mn(2+) site. The oligomerization domain stretch occupies residues 400–540; sequence IDSQLGNKRW…YSTYEDTCET (141 aa). A carbamoyl phosphate synthetic domain region spans residues 541–931; that stretch reads NPTDRKKILI…YKAELAADNL (391 aa). The ATP-grasp 2 domain maps to 672–863; sequence YVLMQKFGIL…LAKIAARVIA (192 aa). ATP contacts are provided by arginine 708, aspartate 747, leucine 749, glutamate 754, glycine 779, valine 780, histidine 781, serine 782, glutamine 822, and glutamate 834. Mg(2+) contacts are provided by glutamine 822, glutamate 834, and asparagine 836. The Mn(2+) site is built by glutamine 822, glutamate 834, and asparagine 836. One can recognise an MGS-like domain in the interval 930–1070; sequence NLLPLTGKVF…INEYHKEMGL (141 aa). An allosteric domain region spans residues 932–1070; the sequence is LPLTGKVFLS…INEYHKEMGL (139 aa).

The protein belongs to the CarB family. In terms of assembly, composed of two chains; the small (or glutamine) chain promotes the hydrolysis of glutamine to ammonia, which is used by the large (or ammonia) chain to synthesize carbamoyl phosphate. Tetramer of heterodimers (alpha,beta)4. Requires Mg(2+) as cofactor. The cofactor is Mn(2+).

The catalysed reaction is hydrogencarbonate + L-glutamine + 2 ATP + H2O = carbamoyl phosphate + L-glutamate + 2 ADP + phosphate + 2 H(+). It catalyses the reaction hydrogencarbonate + NH4(+) + 2 ATP = carbamoyl phosphate + 2 ADP + phosphate + 2 H(+). The protein operates within amino-acid biosynthesis; L-arginine biosynthesis; carbamoyl phosphate from bicarbonate: step 1/1. It functions in the pathway pyrimidine metabolism; UMP biosynthesis via de novo pathway; (S)-dihydroorotate from bicarbonate: step 1/3. Functionally, large subunit of the glutamine-dependent carbamoyl phosphate synthetase (CPSase). CPSase catalyzes the formation of carbamoyl phosphate from the ammonia moiety of glutamine, carbonate, and phosphate donated by ATP, constituting the first step of 2 biosynthetic pathways, one leading to arginine and/or urea and the other to pyrimidine nucleotides. The large subunit (synthetase) binds the substrates ammonia (free or transferred from glutamine from the small subunit), hydrogencarbonate and ATP and carries out an ATP-coupled ligase reaction, activating hydrogencarbonate by forming carboxy phosphate which reacts with ammonia to form carbamoyl phosphate. This is Carbamoyl phosphate synthase large chain from Methanosarcina acetivorans (strain ATCC 35395 / DSM 2834 / JCM 12185 / C2A).